The sequence spans 139 residues: Putative pre-16S rRNA nuclease (139 aa).

The protein belongs to the YqgF nuclease family.

It is found in the cytoplasm. Its function is as follows. Could be a nuclease involved in processing of the 5'-end of pre-16S rRNA. This is Putative pre-16S rRNA nuclease from Streptococcus pneumoniae (strain JJA).